Reading from the N-terminus, the 199-residue chain is Pyridoxine/pyridoxamine 5'-phosphate oxidase (199 aa).

FMN contacts are provided by residues 44 to 49 (RTVLLK), 59 to 60 (YS), Lys66, and Gln91. Substrate is bound at residue Lys49. Residues Tyr109, Arg113, and Ser117 each coordinate substrate. FMN contacts are provided by residues 126 to 127 (QS) and Trp171. Position 177–179 (177–179 (RLH)) interacts with substrate. Arg181 provides a ligand contact to FMN.

The protein belongs to the pyridoxamine 5'-phosphate oxidase family. As to quaternary structure, homodimer. It depends on FMN as a cofactor.

It carries out the reaction pyridoxamine 5'-phosphate + O2 + H2O = pyridoxal 5'-phosphate + H2O2 + NH4(+). It catalyses the reaction pyridoxine 5'-phosphate + O2 = pyridoxal 5'-phosphate + H2O2. It participates in cofactor metabolism; pyridoxal 5'-phosphate salvage; pyridoxal 5'-phosphate from pyridoxamine 5'-phosphate: step 1/1. It functions in the pathway cofactor metabolism; pyridoxal 5'-phosphate salvage; pyridoxal 5'-phosphate from pyridoxine 5'-phosphate: step 1/1. Functionally, catalyzes the oxidation of either pyridoxine 5'-phosphate (PNP) or pyridoxamine 5'-phosphate (PMP) into pyridoxal 5'-phosphate (PLP). The chain is Pyridoxine/pyridoxamine 5'-phosphate oxidase from Xanthomonas oryzae pv. oryzae (strain KACC10331 / KXO85).